The sequence spans 3102 residues: MRLWLGLLAVSNIALGGWNTSEDASIWENYVEDSNYHEFISSESERGLFPNIFNLATNSLITATDTCGQYTAEEYCKLVEHVLLRKTTNTQSPQCDICDANNVHKRHPIEYAIDGTRRWWQSPSLANGLRFEKVNITIDLRQEYQVAYIILKMGNSPRPGTWVLEKSLDGEYYEPWQYYAMQDAECMRQFGIPATTGVPRFQKEDEVHCTSEYSKITPLENGEIHTSLVNGRPGAENTSLELQKFTRARFVRLRLISPRTLNADLMIINKKSDSLDKSVTMRYFYSISDISIGGQCICYGHAESCPSDPVTGQFKCECRHNTCGESCNRCCPLFNQLPWKPGTNSHPNVCQQCQCFNHAHSCVYDDELDRNKWSITPEGVYEGGGRCLECAHNTEGFNCERCKDGYYRPSGLSHYREDACRTCECDPVGSVSDACVRDDQSAENGQKPGDCICKPGFGGRRCERCAPGYRNHPTCEPCPCNRAGSVNFDTCDGASCQCKANVEGIYCDRCKAGTIHLSASNPLGCQPCFCFGHSSTCTQGKWNKAQIINNIGWHLTDLTGGKDVKPEVENGEVLMFNANQNQDRSLYYWKAPDSFKGNMLNSYGGYLHYDVYYVPTEQGATVFVADVAIEGNGIKIEYHSRIEFLPREKMTVAIPMSELSGWYNAEARSPVDKADMMRALANVDRFTVRATYHQPQLQSSIFGLSLDTAVPAPDEIVEEDTSLKALAYHTQDTLMGGVEVCECPENFAGNSCESCVPGYRRVNNQLYGGRCEKCDCHGNSEECDPFTGECLNCRHNTTGSRCELCKPGHVGNPSRGGELGACEQCECPSLDLNPNPECISTELAVLGSVASNEDNYVCINCPLGYEGNKCEYCSDGFFEDPLTGKCIECTCNGNIDPMGIGNCDSETGKCLKCIGHTTGDSCESCKEHHWGNAQLHTCKPCGCHTQGAVNPQCSEENGECECKENYIGAQCDRCKENHGDVENGCPACDCNDTGSIGSDCDQVSGQCNCKQGVFGKQCDQCRPSYFNFTDAGCQFCHCNIYGSIEDGKCDQTTGKCECRENVEGTMCEKCADGYFNITSGDGCEDCGCDPTGSEDVSCNLVTGQCVCKPGVTGLKCDSCLPNFYGLTSEGCTECEPCPAPGQVCDPIDGSCVCPPNTVGEMCENCTTNAWDYHPLNGCKLCDCSDIGSDGGMCNTFTGQCKCKAAYVGLKCDLCTHGFFNFPTCEPCGCNAAGTDPLQCKDGQCLCNEIGECPCKKNVHGTKCDQCGEGTFSLDSSNLKGCTECFCFNRTSNCEQSDLVWQQMYAEDRRAVFQEPWEFYTKKHNINLLREKPSHFNSYPTDATPLYWPLPSTMLGDRTASYNGFLRFKIWNEDNRRGLHGIRPDQQYFRHFPQVIIFGNNRIELEHIPMEINDDGIYKIRLHESEWRVRHSPELTLTRKQMMVALQDTQGIYIRGTYTYPARGDAINIQEVSLDVAVPESKIVAGLSTTKAIGVEKCLGCPQGYTGLSCQNPEVGYYRKKHREYLNQADDIALIGWSEPCSCHGHSQTCNPDTSVCTDCEHNTFGDFCEHCLPGYIGDAREGGANACTKCACPLVENSFSDSCVAVDHGRGYVCNSCKPGYTGQYCETCVAGYYGDPQHIGGTCSPCDCHPDGSLHGACNPLSGQCECKPGVTGRTCSMCQERHAFINRVCTSCDQGCYLPLMETMDTMEEHLGRQNFSGLKPIPWKRVWRIGNESQDLSTFVGGIDKDGEIVKDSKWAKDAFALLDEVNFQMGRSNKSAVSIKQFTGIAEQLILDAQIHYANAFNTTNFLKMFAEHGATTVGGAALDGMLMEAEAHLNATVERGEYVEKRLNRAQQEHKKAEELLKMVTAQKLNETIFEDLKNRIDVLEQWMNDYRETIYDVSKKDTADAERMSLVVGKRINRYKEVSNEIEKLRVEAEDQIAYSRNSIEKARSEELMNMFEDKEKINMTLAELPDLVEQCQNITLLYSQLIDEYDEEYVQTAGRHAEKLEVQAQKIVDRFVDTRTETENPLKASHAYENIVEALKNATEAVDSAAEASEAVSKMLGSEGSESGDANEESLRSQLEKLKNESSLSNVDNSNAVKIVEELKKEKKDLTDRLGHLNELKTSIVKRLGVIKNEASSWDDKHDRMHSILKNGAKTAHERSANVKKESEGIKTEVSAIKAEVEKLMNSTSSGVQEDMEKIRASRTGMEYGAQKLTKVNKLSTANQGRTDKMARNIAILKAKIEQAREKAYQIRLSLNSGERGLCKRSYISPASPSPVNTFHVSYRPLQQVSDAVILVSKTKGRRTQPSEHLAVEIRDKRVVVHWDIGSGKKMITNSHPINYVPSNDRVTWYHIDVLRIGNAVNLTVALKESYDGGFKPRGAPVSVFVGNSKDDNSIFNTIPGETTIDVGTDETVASDIGLTTHKFSGIVGGLRIDEVPLPLWSFESTTGECEGATSPPKTSQRGHLFRDGFANVSMSVSERTMSAITVIFNAFSPNGLLYFRGSEASGDFVAIYLNDGKVMFKINLGGGSVAELTSQNVYNDGKEHTVKAIRTGSEMYLQVDSDADRFNTVITGENTALNIENENHYVAGVPMTLNKEVFGDINWNGFIGCILTVKPSQVGELDLDHPEHSQGKTDGCSQVSGVTDKIIGFPKPGYLITKGISIDNSSTFAFSFRTREENGTLVYQSSKLQKVSKRDSEDDGKGYIAFYLFRGYLVLHFGKDASSRKEVVTFRSSHPYNDGQVHAVFMERNGKIISVKVDDKEIGDSQSLSDETSVGTTSGRLILGGFSDDLKPPNNEIPITSFFIGCISDVFLNMKRVSLAPEKHNAQIGMCSMDDTQGLSPIDDPIDGNGHNGHRKSSKLSFEATNRNYYEVSTQSSHLVMNPNGEETVEKTCETSLGSLQGAVRYGLSKSSHSRINFEAPYPNITDFTVKLSLQTETSNGMIWAWANYKNYTRYIFLDIIDGFATLEVKGHKQPKILKHLGNRINDGQWHDITVEKKNRSLKLIIDSLGPVEMTDCPTPKVMKKRVYVGGVISRHRRQFGLTTPGLDGCIRDFEMNNRIFNNLDEPSTSKNVMPCAKACKLKRSSKRKRNSKN.

Positions 1 to 16 are cleaved as a signal peptide; sequence MRLWLGLLAVSNIALG. 3 N-linked (GlcNAc...) asparagine glycosylation sites follow: N19, N135, and N237. Residues 44–295 form the Laminin N-terminal domain; the sequence is SERGLFPNIF…SISDISIGGQ (252 aa). Intrachain disulfides connect C296/C305, C298/C316, C318/C327, C330/C350, C353/C362, C355/C387, C390/C399, C402/C420, C423/C435, C425/C451, C453/C462, C465/C475, C478/C491, C480/C496, C498/C507, and C510/C525. 4 consecutive Laminin EGF-like domains span residues 296–352, 353–422, 423–477, and 478–527; these read CICY…VCQQ, CQCF…ACRT, CECD…TCEP, and CPCN…GCQP. Positions 548-740 constitute a Laminin IV type A 1 domain; sequence INNIGWHLTD…QDTLMGGVEV (193 aa). Cystine bridges form between C774–C783, C776–C790, C793–C802, C805–C822, C825–C838, C827–C858, C861–C870, C873–C886, C889–C903, C891–C910, C913–C922, C925–C938, C941–C953, C943–C960, C962–C971, C974–C985, C988–C1000, C990–C1007, C1009–C1018, C1021–C1033, C1036–C1049, C1038–C1056, C1058–C1067, C1070–C1083, C1086–C1098, C1088–C1105, C1107–C1116, C1119–C1131, C1134–C1144, C1137–C1151, and C1153–C1162. Laminin EGF-like domains lie at 774-824, 825-888, 889-940, 941-987, 988-1035, 1036-1085, 1086-1133, 1134-1180, 1181-1226, and 1227-1283; these read CDCH…ACEQ, CECP…KCIE, CTCN…TCKP, CGCH…GCPA, CDCN…GCQF, CHCN…GCED, CGCD…GCTE, CEPC…GCKL, CDCS…TCEP, and CGCN…GCTE. The N-linked (GlcNAc...) asparagine glycan is linked to N796. The N-linked (GlcNAc...) asparagine glycan is linked to N991. The N-linked (GlcNAc...) asparagine glycan is linked to N1027. The N-linked (GlcNAc...) asparagine glycan is linked to N1076. Residue N1164 is glycosylated (N-linked (GlcNAc...) asparagine). 9 disulfides stabilise this stretch: C1165/C1178, C1181/C1193, C1183/C1200, C1202/C1211, C1214/C1224, C1227/C1246, C1229/C1252, C1254/C1263, and C1266/C1281. N-linked (GlcNAc...) asparagine glycosylation is present at N1288. In terms of domain architecture, Laminin IV type A 2 spans 1295-1496; sequence QSDLVWQQMY…STTKAIGVEK (202 aa). Cystine bridges form between C1540–C1549, C1542–C1556, C1559–C1568, C1571–C1587, C1590–C1603, C1592–C1614, C1617–C1626, C1629–C1644, C1647–C1659, C1649–C1666, C1668–C1677, and C1680–C1691. Laminin EGF-like domains are found at residues 1540-1589, 1590-1646, and 1647-1693; these read CSCH…ACTK, CACP…TCSP, and CDCH…VCTS. N-linked (GlcNAc...) asparagine glycans are attached at residues N1717, N1734, N1777, N1806, N1839, N1875, N1969, N1984, and N2048. Residues 2061-2084 are disordered; sequence EAVSKMLGSEGSESGDANEESLRS. N2091, N2193, N2369, and N2479 each carry an N-linked (GlcNAc...) asparagine glycan. 3 Laminin G-like domains span residues 2467 to 2644, 2652 to 2839, and 2913 to 3088; these read SQRG…TDGC, DKII…IGMC, and RYGL…AKAC. An intrachain disulfide couples C2617 to C2644. N2672 and N2686 each carry an N-linked (GlcNAc...) asparagine glycan. C2814 and C2839 are joined by a disulfide. Residues N2932, N2959, and N3007 are each glycosylated (N-linked (GlcNAc...) asparagine). C3058 and C3088 are joined by a disulfide.

Laminin is a complex glycoprotein, consisting of three different polypeptide chains (alpha, beta, gamma), which are bound to each other by disulfide bonds into a cross-shaped molecule comprising one long and three short arms with globules at each end.

The protein resides in the secreted. It localises to the extracellular space. The protein localises to the extracellular matrix. It is found in the basement membrane. Its function is as follows. Binding to cells via a high affinity receptor, laminin is thought to mediate the attachment, migration and organization of cells into tissues during embryonic development by interacting with other extracellular matrix components. Required to assemble a stable basement membrane and for organizing receptor complexes and cytoskeletal components to the proper cell surfaces. During embryogenesis, does not require the presence of collagen type IV in order to associate with cell surfaces, prior to assembly of the prototypical basement membrane. Plays an important role in muscle contraction of the body. Probably plays a distinct role from the related laminin subunit alpha epi-1. The sequence is that of Laminin subunit alpha lam-3 from Caenorhabditis elegans.